A 459-amino-acid chain; its full sequence is ATP synthase subunit beta (459 aa).

Glycine 148–threonine 155 is a binding site for ATP.

The protein belongs to the ATPase alpha/beta chains family. F-type ATPases have 2 components, CF(1) - the catalytic core - and CF(0) - the membrane proton channel. CF(1) has five subunits: alpha(3), beta(3), gamma(1), delta(1), epsilon(1). CF(0) has three main subunits: a(1), b(2) and c(9-12). The alpha and beta chains form an alternating ring which encloses part of the gamma chain. CF(1) is attached to CF(0) by a central stalk formed by the gamma and epsilon chains, while a peripheral stalk is formed by the delta and b chains.

The protein localises to the cell inner membrane. The catalysed reaction is ATP + H2O + 4 H(+)(in) = ADP + phosphate + 5 H(+)(out). In terms of biological role, produces ATP from ADP in the presence of a proton gradient across the membrane. The catalytic sites are hosted primarily by the beta subunits. In Ruthia magnifica subsp. Calyptogena magnifica, this protein is ATP synthase subunit beta.